Reading from the N-terminus, the 365-residue chain is H-2 class I histocompatibility antigen, D-D alpha chain (365 aa).

Positions 1–24 are cleaved as a signal peptide; sequence MGAMAPRTLLLLLAAALGPTQTRA. The segment at 25-114 is alpha-1; the sequence is GSHSLRYFVT…ALRYYNQSAG (90 aa). Topologically, residues 25–311 are extracellular; sequence GSHSLRYFVT…EPPSSTKTNT (287 aa). N-linked (GlcNAc...) asparagine glycosylation is present at Asn110. Positions 115-206 are alpha-2; that stretch reads GSHTLQWMAG…KNGNATLLRT (92 aa). A disulfide bridge links Cys125 with Cys188. Asn200 is a glycosylation site (N-linked (GlcNAc...) asparagine). The segment at 207 to 298 is alpha-3; that stretch reads DPPKAHVTHH…GLPEPLTLRW (92 aa). In terms of domain architecture, Ig-like C1-type spans 209-297; that stretch reads PKAHVTHHRR…EGLPEPLTLR (89 aa). Cys227 and Cys283 form a disulfide bridge. The tract at residues 299 to 311 is connecting peptide; the sequence is GKEEPPSSTKTNT. Residues 312–334 traverse the membrane as a helical segment; it reads VIIAVPVVLGAVVILGAVMAFVM. At 335 to 365 the chain is on the cytoplasmic side; sequence KRRRNTGGKGGDYALAPGSQSSDMSLPDCKV. The interval 343–365 is disordered; that stretch reads KGGDYALAPGSQSSDMSLPDCKV. Phosphoserine is present on residues Ser356 and Ser359.

It belongs to the MHC class I family. As to quaternary structure, heterodimer of an alpha chain and a beta chain (beta-2-microglobulin).

The protein resides in the membrane. Its function is as follows. Involved in the presentation of foreign antigens to the immune system. In Mus musculus (Mouse), this protein is H-2 class I histocompatibility antigen, D-D alpha chain (H2-D1).